Here is a 125-residue protein sequence, read N- to C-terminus: Calcitonin receptor-stimulating peptide 3 (125 aa).

A signal peptide spans 1 to 25 (MGFWKFPPFLILSILVLYQAGMLHA). Residues 26-79 (APFRMALGSSFDSATLTEEEMSLLLVAMVKDYVQMKATVLEQETEDFSITTQER) constitute a propeptide that is removed on maturation. Cysteines 81 and 86 form a disulfide. Leucine amide is present on leucine 116. Positions 122–125 (QPQA) are excised as a propeptide.

The protein belongs to the calcitonin family. In terms of tissue distribution, mainly expressed in the thyroid gland and CNS. Found in the nerve cells of cerebrum, hippocampus, hypothalamus, pons/midbrain and thalamus.

It is found in the secreted. The chain is Calcitonin receptor-stimulating peptide 3 (CRSP3) from Sus scrofa (Pig).